The chain runs to 160 residues: Phosphopantetheine adenylyltransferase (160 aa).

Position 9 (Ser-9) interacts with substrate. ATP-binding positions include 9–10 (SF) and His-17. Substrate contacts are provided by Lys-41, Leu-73, and Lys-87. Residues 88 to 90 (GLR), Glu-98, and 123 to 129 (YGYLSSS) contribute to the ATP site.

This sequence belongs to the bacterial CoaD family. In terms of assembly, homohexamer. It depends on Mg(2+) as a cofactor.

The protein resides in the cytoplasm. The catalysed reaction is (R)-4'-phosphopantetheine + ATP + H(+) = 3'-dephospho-CoA + diphosphate. It participates in cofactor biosynthesis; coenzyme A biosynthesis; CoA from (R)-pantothenate: step 4/5. Functionally, reversibly transfers an adenylyl group from ATP to 4'-phosphopantetheine, yielding dephospho-CoA (dPCoA) and pyrophosphate. The polypeptide is Phosphopantetheine adenylyltransferase (Caldanaerobacter subterraneus subsp. tengcongensis (strain DSM 15242 / JCM 11007 / NBRC 100824 / MB4) (Thermoanaerobacter tengcongensis)).